The primary structure comprises 311 residues: Insulin-like growth factor-binding protein 2 (311 aa).

The N-terminal stretch at Met1 to Pro36 is a signal peptide. An IGFBP N-terminal domain is found at Val38–Pro120. Cystine bridges form between Cys42-Cys70, Cys45-Cys72, Cys53-Cys73, Cys61-Cys76, Cys84-Cys97, and Cys91-Cys117. Disordered regions lie at residues Gln112 to Thr168 and Gly188 to Thr210. One can recognise a Thyroglobulin type-1 domain in the interval Arg209–Cys291. Cystine bridges form between Cys212/Cys246, Cys257/Cys268, and Cys270/Cys291. Residues Arg286 to Asp288 carry the Cell attachment site motif.

In terms of assembly, binds IGF2 more than IGF1.

Its subcellular location is the secreted. Its function is as follows. Inhibits IGF-mediated growth and developmental rates. IGF-binding proteins prolong the half-life of the IGFs and have been shown to either inhibit or stimulate the growth promoting effects of the IGFs on cell culture. They alter the interaction of IGFs with their cell surface receptors. The sequence is that of Insulin-like growth factor-binding protein 2 (IGFBP2) from Gallus gallus (Chicken).